A 445-amino-acid polypeptide reads, in one-letter code: MYKAKRTAAQKVRRCLGKYELGRAIGQGTFAKVRFAKNMETGDHVAIKILDKAKVQKHRLVEQIRREICTMKLIQHPNVVHLHEVMGSKTRIFIVLEYVMGGELHDIIATSGRLKEDEARKYFQQLINAVDYCHSRGVYHRDLKLENLLLDTAGNIKVSDFGLSAISEQVKADGLLHTTCGTPNYVAPEVIEDKGYDGALADLWSCGVILFVLLAGYLPFEDENIVSLYNKISGAQFTCPSWFSAEAKRLIARILDPNPATRITTSQVLQDQWFKKGYESPVFDDKYYPYFHDVYDAFGDSEEKHVKEAMEEQPTLMNAFELISLNKGLNLDNFFESDKKYKRETRFTSQCPPKEIINRIEEAANLLGFNIQKRNYRMRMENIKEGRKGHLNIATEVFQVAPSLHVVELKKAKGDTLEFQKFYQTLSTQLKDVVWELEDAAEDMS.

In terms of domain architecture, Protein kinase spans 19 to 274 (YELGRAIGQG…TSQVLQDQWF (256 aa)). ATP is bound by residues 25–33 (IGQGTFAKV) and lysine 48. The Proton acceptor role is filled by aspartate 142. The tract at residues 160-189 (DFGLSAISEQVKADGLLHTTCGTPNYVAPE) is activation loop. In terms of domain architecture, NAF spans 309 to 336 (AMEEQPTLMNAFELISLNKGLNLDNFFE). Residues 342-371 (KRETRFTSQCPPKEIINRIEEAANLLGFNI) are PPI.

Belongs to the protein kinase superfamily. CAMK Ser/Thr protein kinase family. SNF1 subfamily. The cofactor is Mn(2+).

The catalysed reaction is L-seryl-[protein] + ATP = O-phospho-L-seryl-[protein] + ADP + H(+). It catalyses the reaction L-threonyl-[protein] + ATP = O-phospho-L-threonyl-[protein] + ADP + H(+). Functionally, CIPK serine-threonine protein kinases interact with CBL proteins. Binding of a CBL protein to the regulatory NAF domain of CIPK protein lead to the activation of the kinase in a calcium-dependent manner. The chain is CBL-interacting protein kinase 3 (CIPK3) from Oryza sativa subsp. japonica (Rice).